A 274-amino-acid chain; its full sequence is Thymidylate synthase (274 aa).

Arg-21 is a binding site for dUMP. Position 51 (His-51) interacts with (6R)-5,10-methylene-5,6,7,8-tetrahydrofolate. Residue 123–124 coordinates dUMP; it reads RR. Catalysis depends on Cys-156, which acts as the Nucleophile. DUMP contacts are provided by residues 176–179, Asn-187, and 217–219; these read RSAD and HIY. Asp-179 contributes to the (6R)-5,10-methylene-5,6,7,8-tetrahydrofolate binding site. Ser-273 is a (6R)-5,10-methylene-5,6,7,8-tetrahydrofolate binding site.

It belongs to the thymidylate synthase family. Bacterial-type ThyA subfamily. Homodimer.

It localises to the cytoplasm. It catalyses the reaction dUMP + (6R)-5,10-methylene-5,6,7,8-tetrahydrofolate = 7,8-dihydrofolate + dTMP. Its pathway is pyrimidine metabolism; dTTP biosynthesis. Its function is as follows. Catalyzes the reductive methylation of 2'-deoxyuridine-5'-monophosphate (dUMP) to 2'-deoxythymidine-5'-monophosphate (dTMP) while utilizing 5,10-methylenetetrahydrofolate (mTHF) as the methyl donor and reductant in the reaction, yielding dihydrofolate (DHF) as a by-product. This enzymatic reaction provides an intracellular de novo source of dTMP, an essential precursor for DNA biosynthesis. This is Thymidylate synthase from Francisella tularensis subsp. tularensis (strain SCHU S4 / Schu 4).